Consider the following 336-residue polypeptide: Anthranilate phosphoribosyltransferase (336 aa).

Residues Gly83, 86–87, Thr91, 93–96, 111–119, and Ser123 contribute to the 5-phospho-alpha-D-ribose 1-diphosphate site; these read GD, NIST, and KHGNRSVSS. Residue Gly83 participates in anthranilate binding. Ser95 serves as a coordination point for Mg(2+). Asn114 lines the anthranilate pocket. Position 169 (Arg169) interacts with anthranilate. Residues Asp227 and Glu228 each coordinate Mg(2+).

The protein belongs to the anthranilate phosphoribosyltransferase family. Homodimer. It depends on Mg(2+) as a cofactor.

The enzyme catalyses N-(5-phospho-beta-D-ribosyl)anthranilate + diphosphate = 5-phospho-alpha-D-ribose 1-diphosphate + anthranilate. It functions in the pathway amino-acid biosynthesis; L-tryptophan biosynthesis; L-tryptophan from chorismate: step 2/5. Catalyzes the transfer of the phosphoribosyl group of 5-phosphorylribose-1-pyrophosphate (PRPP) to anthranilate to yield N-(5'-phosphoribosyl)-anthranilate (PRA). The protein is Anthranilate phosphoribosyltransferase of Vibrio campbellii (strain ATCC BAA-1116).